Consider the following 452-residue polypeptide: MEDKKANIIATILILALVVVIIAARVSLKLSKTFYLIAGVDISLILAVICFLIIRSRYNKERKLLVSRFASEGRELRIEYSFLRKVAGVPTKFKLEDLEEATDGFRSLIGKGGSGSVFKGVLKDGSQVAVKRIEGEEKGEREFRSEVAAIASVQHKNLVRLYGYSSSTSANRPRFLVYDYIVNSSLDIWIFPDRGNRGRSGGGCLSWEQRYQVAIDVAKALAYLHHDCRSKILHLDVKPENILLDENFRAVVTDFGLSKLIARDESRVLTDIRGTRGYLAPEWLLEHGISEKSDVYSYGIVLLEMIGGRRSISRVEVKETKKKKLEYFPRIVNQKMRERKIMEIVDQRLIEVNEVDEEEVMKLVCVALWCIQEKSKKRPDMTMVIEMLEGRVPVNEPPDSDVVVVDLLAADDDDASTGVRRVVNIPKLQIHRERNFRLSSICSSIISPISPR.

A signal peptide spans 1–23 (MEDKKANIIATILILALVVVIIA). The Extracellular segment spans residues 24–33 (ARVSLKLSKT). A helical transmembrane segment spans residues 34 to 54 (FYLIAGVDISLILAVICFLII). Topologically, residues 55 to 452 (RSRYNKERKL…SSIISPISPR (398 aa)) are cytoplasmic. One can recognise a Protein kinase domain in the interval 103-392 (DGFRSLIGKG…MVIEMLEGRV (290 aa)). ATP-binding positions include 109–117 (IGKGGSGSV) and Lys131. Tyr178 is subject to Phosphotyrosine. Asp236 functions as the Proton acceptor in the catalytic mechanism. Thr270 and Thr275 each carry phosphothreonine.

It belongs to the protein kinase superfamily. Ser/Thr protein kinase family.

The protein resides in the membrane. The catalysed reaction is L-seryl-[protein] + ATP = O-phospho-L-seryl-[protein] + ADP + H(+). It carries out the reaction L-threonyl-[protein] + ATP = O-phospho-L-threonyl-[protein] + ADP + H(+). The sequence is that of Probable receptor-like protein kinase At5g20050 from Arabidopsis thaliana (Mouse-ear cress).